A 199-amino-acid chain; its full sequence is Peptidyl-tRNA hydrolase (199 aa).

TRNA is bound at residue tyrosine 18. Histidine 23 acts as the Proton acceptor in catalysis. The tRNA site is built by tyrosine 72, asparagine 74, and asparagine 120.

The protein belongs to the PTH family. As to quaternary structure, monomer.

The protein resides in the cytoplasm. The catalysed reaction is an N-acyl-L-alpha-aminoacyl-tRNA + H2O = an N-acyl-L-amino acid + a tRNA + H(+). In terms of biological role, hydrolyzes ribosome-free peptidyl-tRNAs (with 1 or more amino acids incorporated), which drop off the ribosome during protein synthesis, or as a result of ribosome stalling. Catalyzes the release of premature peptidyl moieties from peptidyl-tRNA molecules trapped in stalled 50S ribosomal subunits, and thus maintains levels of free tRNAs and 50S ribosomes. The sequence is that of Peptidyl-tRNA hydrolase from Bifidobacterium adolescentis (strain ATCC 15703 / DSM 20083 / NCTC 11814 / E194a).